The sequence spans 588 residues: Aspartate--tRNA(Asp/Asn) ligase (588 aa).

An L-aspartate-binding site is contributed by Glu172. Residues 196–199 (QLFK) form an aspartate region. Arg218 lines the L-aspartate pocket. ATP is bound by residues 218–220 (RDE) and Gln227. Position 450 (His450) interacts with L-aspartate. Glu484 is an ATP binding site. Arg491 contributes to the L-aspartate binding site. ATP is bound at residue 536-539 (GLDR).

The protein belongs to the class-II aminoacyl-tRNA synthetase family. Type 1 subfamily. In terms of assembly, homodimer.

It localises to the cytoplasm. The catalysed reaction is tRNA(Asx) + L-aspartate + ATP = L-aspartyl-tRNA(Asx) + AMP + diphosphate. Aspartyl-tRNA synthetase with relaxed tRNA specificity since it is able to aspartylate not only its cognate tRNA(Asp) but also tRNA(Asn). Reaction proceeds in two steps: L-aspartate is first activated by ATP to form Asp-AMP and then transferred to the acceptor end of tRNA(Asp/Asn). In Nitrosospira multiformis (strain ATCC 25196 / NCIMB 11849 / C 71), this protein is Aspartate--tRNA(Asp/Asn) ligase.